The primary structure comprises 303 residues: Probable 5-dehydro-4-deoxyglucarate dehydratase (303 aa).

It belongs to the DapA family.

The enzyme catalyses 5-dehydro-4-deoxy-D-glucarate + H(+) = 2,5-dioxopentanoate + CO2 + H2O. It functions in the pathway carbohydrate acid metabolism; D-glucarate degradation; 2,5-dioxopentanoate from D-glucarate: step 2/2. The sequence is that of Probable 5-dehydro-4-deoxyglucarate dehydratase from Pseudomonas putida (strain ATCC 700007 / DSM 6899 / JCM 31910 / BCRC 17059 / LMG 24140 / F1).